Consider the following 209-residue polypeptide: Large ribosomal subunit protein uL3 (209 aa).

Q150 carries the N5-methylglutamine modification.

It belongs to the universal ribosomal protein uL3 family. In terms of assembly, part of the 50S ribosomal subunit. Forms a cluster with proteins L14 and L19. Methylated by PrmB.

Functionally, one of the primary rRNA binding proteins, it binds directly near the 3'-end of the 23S rRNA, where it nucleates assembly of the 50S subunit. This is Large ribosomal subunit protein uL3 from Vibrio vulnificus (strain CMCP6).